The chain runs to 171 residues: Peptide methionine sulfoxide reductase MsrA (171 aa).

Residue cysteine 13 is part of the active site.

It belongs to the MsrA Met sulfoxide reductase family.

The catalysed reaction is L-methionyl-[protein] + [thioredoxin]-disulfide + H2O = L-methionyl-(S)-S-oxide-[protein] + [thioredoxin]-dithiol. It carries out the reaction [thioredoxin]-disulfide + L-methionine + H2O = L-methionine (S)-S-oxide + [thioredoxin]-dithiol. Functionally, has an important function as a repair enzyme for proteins that have been inactivated by oxidation. Catalyzes the reversible oxidation-reduction of methionine sulfoxide in proteins to methionine. This Mycobacterium sp. (strain JLS) protein is Peptide methionine sulfoxide reductase MsrA.